A 485-amino-acid chain; its full sequence is Protein hunchback (485 aa).

Residues 1 to 77 are disordered; it reads TSSTARKTPE…EEDDDIRTPK (77 aa). Polar residues predominate over residues 16-37; it reads QDQNQLLKTPIQTNGNQQSTFD. Acidic residues predominate over residues 59 to 72; it reads ADVDDENDAEEDDD. 4 C2H2-type zinc fingers span residues 87–109, 116–138, 144–166, and 172–196; these read YKCK…NRIH, LKCQ…LRNH, FQCK…MKSH, and YRCK…KYSH. Disordered regions lie at residues 229–270, 318–361, and 398–422; these read KDEG…PPSS, NGWQ…QVKH, and PKPV…EDDS. The span at 257–270 shows a compositional bias: polar residues; it reads NFEQSQHVPTPPSS. A compositionally biased stretch (acidic residues) spans 325–335; it reads NCNEEETPEKE. Polar residues predominate over residues 345-358; that stretch reads DLSSNPSTPSTVSQ. Positions 402–416 are enriched in low complexity; sequence QLQLPTSSTTTPLKT. C2H2-type zinc fingers lie at residues 432-454 and 460-484; these read YECK…MGYH and FKCN…RDAH.

This sequence belongs to the hunchback C2H2-type zinc-finger protein family.

The protein localises to the nucleus. Its function is as follows. Gap class segmentation protein that controls development of head structures. In Clogmia albipunctata (Mothmidge), this protein is Protein hunchback (hb).